The primary structure comprises 515 residues: Bifunctional purine biosynthesis protein PurH (515 aa).

Residues 1–144 (MGRKALISVS…KNHKFVTIIV (144 aa)) form the MGS-like domain.

Belongs to the PurH family.

It carries out the reaction (6R)-10-formyltetrahydrofolate + 5-amino-1-(5-phospho-beta-D-ribosyl)imidazole-4-carboxamide = 5-formamido-1-(5-phospho-D-ribosyl)imidazole-4-carboxamide + (6S)-5,6,7,8-tetrahydrofolate. The enzyme catalyses IMP + H2O = 5-formamido-1-(5-phospho-D-ribosyl)imidazole-4-carboxamide. Its pathway is purine metabolism; IMP biosynthesis via de novo pathway; 5-formamido-1-(5-phospho-D-ribosyl)imidazole-4-carboxamide from 5-amino-1-(5-phospho-D-ribosyl)imidazole-4-carboxamide (10-formyl THF route): step 1/1. It participates in purine metabolism; IMP biosynthesis via de novo pathway; IMP from 5-formamido-1-(5-phospho-D-ribosyl)imidazole-4-carboxamide: step 1/1. The polypeptide is Bifunctional purine biosynthesis protein PurH (Persephonella marina (strain DSM 14350 / EX-H1)).